Consider the following 783-residue polypeptide: Metabotropic glutamate receptor-like protein J (783 aa).

Residues 1-20 form the signal peptide; sequence MKILLYIAIILSFFSLITIS. Over 21–383 the chain is Extracellular; that stretch reads SECKIAVLLS…DYPNSLKYGV (363 aa). Positions 56–85 form a coiled coil; it reads DFSIYYENLEESMEEAEKAFQDALHKGANL. N-linked (GlcNAc...) asparagine glycans are attached at residues Asn-181, Asn-196, Asn-256, Asn-282, and Asn-315. The chain crosses the membrane as a helical span at residues 384–404; sequence TIVSGVCIFICLVCMTLVVVF. The Cytoplasmic segment spans residues 405–415; the sequence is KKARVIKSSSP. Residues 416-436 form a helical membrane-spanning segment; it reads AFLLLILLGCCIIFAACILFA. At 437-443 the chain is on the extracellular side; that stretch reads QSPTNQT. Asn-441 carries N-linked (GlcNAc...) asparagine glycosylation. A helical transmembrane segment spans residues 444–464; the sequence is CSARIWLLSLGYTLFLGNLLV. Topologically, residues 465–489 are cytoplasmic; it reads KNWRIWLLFDNPKLKKRAITNWKLY. A helical membrane pass occupies residues 490–510; the sequence is PWVFAILAIDVMILAIWQGLG. The Extracellular portion of the chain corresponds to 511 to 538; that stretch reads NINAESRIGYDSLTQYQYKNVCSSDDQG. A helical membrane pass occupies residues 539-559; sequence SIALYLLLVFHGLVLLVACFI. Residues 560 to 575 lie on the Cytoplasmic side of the membrane; it reads SFKIKVVDIEEFNESK. A helical transmembrane segment spans residues 576–596; the sequence is PITTSVYIITFCLFIVIPLMV. At 597 to 604 the chain is on the extracellular side; the sequence is SPQSLTSQ. The chain crosses the membrane as a helical span at residues 605–625; that stretch reads TTIICVCAIVTTLISMLLLFG. The Cytoplasmic segment spans residues 626 to 783; the sequence is SKFYKMATQG…GETEIDSNNV (158 aa). A compositionally biased stretch (low complexity) spans 647 to 656; it reads KSSSKSSKSS. 2 disordered regions span residues 647–696 and 731–783; these read KSSS…FSNK and QLQQ…SNNV. Positions 670–679 are enriched in acidic residues; it reads GEDDTSDETS. Polar residues predominate over residues 763–783; it reads VLSKRISNQQNGETEIDSNNV.

The protein in the N-terminal section; belongs to the BMP lipoprotein family. This sequence in the C-terminal section; belongs to the G-protein coupled receptor 3 family. GABA-B receptor subfamily.

The protein localises to the cell membrane. It localises to the membrane. Its subcellular location is the endoplasmic reticulum membrane. It is found in the golgi apparatus membrane. The protein resides in the nucleus envelope. Its function is as follows. May act during the development and be a negative regulator. In Dictyostelium discoideum (Social amoeba), this protein is Metabotropic glutamate receptor-like protein J (grlJ).